A 132-amino-acid chain; its full sequence is Lectin OAA (132 aa).

Tandem repeats lie at residues 1 to 66 (ALYN…TLLG) and 67 to 132 (NNSY…GTTL). The 2 X approximate tandem repeats stretch occupies residues 1 to 132 (ALYNVENQWG…GPIGFKGTTL (132 aa)).

In terms of assembly, monomer.

Its function is as follows. Lectin specific for high mannose N-glycans, recognizes the branched moiety of these glycans. Does not recognize other types of N-glycans or monosaccharides. Agglutinates trypsin-treated rabbit erythrocytes. Does not require divalent cations for activity. Inhibits HIV replication in MT4 cells with an EC(50) of 45 nM. Binds to the HIV envelope glycoprotein gp120. This Planktothrix agardhii (Oscillatoria agardhii) protein is Lectin OAA.